We begin with the raw amino-acid sequence, 344 residues long: Uroporphyrinogen decarboxylase (344 aa).

Substrate contacts are provided by residues 24–28 (RQAGR), Phe43, Asp74, Tyr149, Ser204, and His319.

This sequence belongs to the uroporphyrinogen decarboxylase family. As to quaternary structure, homodimer.

The protein resides in the cytoplasm. The enzyme catalyses uroporphyrinogen III + 4 H(+) = coproporphyrinogen III + 4 CO2. It participates in porphyrin-containing compound metabolism; protoporphyrin-IX biosynthesis; coproporphyrinogen-III from 5-aminolevulinate: step 4/4. In terms of biological role, catalyzes the decarboxylation of four acetate groups of uroporphyrinogen-III to yield coproporphyrinogen-III. This Agrobacterium fabrum (strain C58 / ATCC 33970) (Agrobacterium tumefaciens (strain C58)) protein is Uroporphyrinogen decarboxylase.